The chain runs to 133 residues: S-adenosylmethionine decarboxylase proenzyme (133 aa).

Catalysis depends on S63, which acts as the Schiff-base intermediate with substrate; via pyruvic acid. Residue S63 is modified to Pyruvic acid (Ser); by autocatalysis. Catalysis depends on H68, which acts as the Proton acceptor; for processing activity. C83 (proton donor; for catalytic activity) is an active-site residue.

This sequence belongs to the prokaryotic AdoMetDC family. Type 1 subfamily. In terms of assembly, heterotetramer of two alpha and two beta chains arranged as a dimer of alpha/beta heterodimers. It depends on pyruvate as a cofactor. Is synthesized initially as an inactive proenzyme. Formation of the active enzyme involves a self-maturation process in which the active site pyruvoyl group is generated from an internal serine residue via an autocatalytic post-translational modification. Two non-identical subunits are generated from the proenzyme in this reaction, and the pyruvate is formed at the N-terminus of the alpha chain, which is derived from the carboxyl end of the proenzyme. The post-translation cleavage follows an unusual pathway, termed non-hydrolytic serinolysis, in which the side chain hydroxyl group of the serine supplies its oxygen atom to form the C-terminus of the beta chain, while the remainder of the serine residue undergoes an oxidative deamination to produce ammonia and the pyruvoyl group blocking the N-terminus of the alpha chain.

It catalyses the reaction S-adenosyl-L-methionine + H(+) = S-adenosyl 3-(methylsulfanyl)propylamine + CO2. Its pathway is amine and polyamine biosynthesis; S-adenosylmethioninamine biosynthesis; S-adenosylmethioninamine from S-adenosyl-L-methionine: step 1/1. Catalyzes the decarboxylation of S-adenosylmethionine to S-adenosylmethioninamine (dcAdoMet), the propylamine donor required for the synthesis of the polyamines spermine and spermidine from the diamine putrescine. This Acidithiobacillus ferrooxidans (strain ATCC 23270 / DSM 14882 / CIP 104768 / NCIMB 8455) (Ferrobacillus ferrooxidans (strain ATCC 23270)) protein is S-adenosylmethionine decarboxylase proenzyme.